The primary structure comprises 184 residues: Shikimate kinase (184 aa).

15–20 contacts ATP; it reads GAGKTS. Position 19 (Thr19) interacts with Mg(2+). Substrate is bound by residues Asp37, Arg61, and Gly83. Arg123 lines the ATP pocket. Residue Arg142 participates in substrate binding.

This sequence belongs to the shikimate kinase family. As to quaternary structure, monomer. Mg(2+) serves as cofactor.

It is found in the cytoplasm. It carries out the reaction shikimate + ATP = 3-phosphoshikimate + ADP + H(+). It functions in the pathway metabolic intermediate biosynthesis; chorismate biosynthesis; chorismate from D-erythrose 4-phosphate and phosphoenolpyruvate: step 5/7. Catalyzes the specific phosphorylation of the 3-hydroxyl group of shikimic acid using ATP as a cosubstrate. This Coxiella burnetii (strain CbuK_Q154) (Coxiella burnetii (strain Q154)) protein is Shikimate kinase.